The sequence spans 241 residues: Eukaryotic translation initiation factor 3 subunit J (241 aa).

The disordered stretch occupies residues 1–97 (MEEDWEQLSE…EEEDMTPEQK (97 aa)). The span at 28 to 45 (GEDEEEEVKDSWEDEDEL) shows a compositional bias: acidic residues. The stretch at 31–119 (EEEEVKDSWE…ESDLKNALDT (89 aa)) forms a coiled coil. 2 stretches are compositionally biased toward basic and acidic residues: residues 46 to 58 (EEKK…ETPK) and 69 to 87 (IADK…RLEK).

It belongs to the eIF-3 subunit J family. As to quaternary structure, component of the eukaryotic translation initiation factor 3 (eIF-3) complex.

The protein resides in the cytoplasm. Its function is as follows. Component of the eukaryotic translation initiation factor 3 (eIF-3) complex, which is involved in protein synthesis of a specialized repertoire of mRNAs and, together with other initiation factors, stimulates binding of mRNA and methionyl-tRNAi to the 40S ribosome. The eIF-3 complex specifically targets and initiates translation of a subset of mRNAs involved in cell proliferation. The sequence is that of Eukaryotic translation initiation factor 3 subunit J from Aedes aegypti (Yellowfever mosquito).